We begin with the raw amino-acid sequence, 373 residues long: 4-hydroxy-3-methylbut-2-en-1-yl diphosphate synthase (flavodoxin) (373 aa).

Residues cysteine 268, cysteine 271, cysteine 303, and glutamate 310 each coordinate [4Fe-4S] cluster.

This sequence belongs to the IspG family. [4Fe-4S] cluster serves as cofactor.

It catalyses the reaction (2E)-4-hydroxy-3-methylbut-2-enyl diphosphate + oxidized [flavodoxin] + H2O + 2 H(+) = 2-C-methyl-D-erythritol 2,4-cyclic diphosphate + reduced [flavodoxin]. The protein operates within isoprenoid biosynthesis; isopentenyl diphosphate biosynthesis via DXP pathway; isopentenyl diphosphate from 1-deoxy-D-xylulose 5-phosphate: step 5/6. Converts 2C-methyl-D-erythritol 2,4-cyclodiphosphate (ME-2,4cPP) into 1-hydroxy-2-methyl-2-(E)-butenyl 4-diphosphate. The sequence is that of 4-hydroxy-3-methylbut-2-en-1-yl diphosphate synthase (flavodoxin) from Exiguobacterium sp. (strain ATCC BAA-1283 / AT1b).